The following is a 572-amino-acid chain: Moesin/ezrin/radixin homolog 1 (572 aa).

The FERM domain maps to 1–291 (MNVRVTTMDA…GNHELYMRRR (291 aa)). The segment at 456-491 (TTTPSHHHVEEEEEMDNEEELVNGENGNQDFSKDFD) is disordered. Acidic residues predominate over residues 466 to 477 (EEEEMDNEEELV). At Thr-553 the chain carries Phosphothreonine.

As to quaternary structure, interacts with cytoskeletal actin.

The protein localises to the cell junction. It localises to the adherens junction. The protein resides in the cell projection. Its subcellular location is the microvillus. It is found in the rhabdomere. The protein localises to the cell membrane. It localises to the cytoplasm. The protein resides in the cytoskeleton. Its function is as follows. Involved in connections of major cytoskeletal structures to the plasma membrane. The polypeptide is Moesin/ezrin/radixin homolog 1 (Culex quinquefasciatus (Southern house mosquito)).